The chain runs to 276 residues: Undecaprenyl-diphosphatase 1 (276 aa).

A run of 6 helical transmembrane segments spans residues 43–63, 85–105, 109–129, 184–204, 214–234, and 254–274; these read RAMAFNIIIQLGAILAVVWEF, ANLLIAFLPAVVLGVIFADLI, LFNPITVAAALVVGGIVMLWA, ATEFSFFLAMPTMVGAAVYSG, ADFPVFAIGFVTAFIFAMIAV, and IVFGLVILATWQFGWVDWTAA.

It belongs to the UppP family.

The protein resides in the cell inner membrane. The catalysed reaction is di-trans,octa-cis-undecaprenyl diphosphate + H2O = di-trans,octa-cis-undecaprenyl phosphate + phosphate + H(+). Functionally, catalyzes the dephosphorylation of undecaprenyl diphosphate (UPP). Confers resistance to bacitracin. This Pseudomonas fluorescens (strain Pf0-1) protein is Undecaprenyl-diphosphatase 1.